A 250-amino-acid chain; its full sequence is Leucyl/phenylalanyl-tRNA--protein transferase (250 aa).

The protein belongs to the L/F-transferase family.

The protein localises to the cytoplasm. The catalysed reaction is N-terminal L-lysyl-[protein] + L-leucyl-tRNA(Leu) = N-terminal L-leucyl-L-lysyl-[protein] + tRNA(Leu) + H(+). It catalyses the reaction N-terminal L-arginyl-[protein] + L-leucyl-tRNA(Leu) = N-terminal L-leucyl-L-arginyl-[protein] + tRNA(Leu) + H(+). The enzyme catalyses L-phenylalanyl-tRNA(Phe) + an N-terminal L-alpha-aminoacyl-[protein] = an N-terminal L-phenylalanyl-L-alpha-aminoacyl-[protein] + tRNA(Phe). Functionally, functions in the N-end rule pathway of protein degradation where it conjugates Leu, Phe and, less efficiently, Met from aminoacyl-tRNAs to the N-termini of proteins containing an N-terminal arginine or lysine. The protein is Leucyl/phenylalanyl-tRNA--protein transferase of Xanthomonas oryzae pv. oryzae (strain MAFF 311018).